Reading from the N-terminus, the 246-residue chain is O-antigen export system ATP-binding protein RfbB (246 aa).

Residues Ser-22–Ala-246 enclose the ABC transporter domain. Residue Gly-63–Ser-70 participates in ATP binding.

Belongs to the ABC transporter superfamily.

It is found in the cell inner membrane. Its function is as follows. May form an ATP-driven O-antigen export apparatus, in association with RfbA. This is O-antigen export system ATP-binding protein RfbB (rfbB) from Klebsiella pneumoniae.